Consider the following 397-residue polypeptide: N-acetyllactosaminide beta-1,3-N-acetylglucosaminyltransferase 2 (397 aa).

Topologically, residues 1–7 (MSVGRRR) are cytoplasmic. A helical; Signal-anchor for type II membrane protein membrane pass occupies residues 8–28 (IKLLGILMMANVFIYFIMEVS). Over 29–397 (KSSSQEKNGK…SQLQSAHLKC (369 aa)) the chain is Lumenal. N79, N89, N127, N173, and N219 each carry an N-linked (GlcNAc...) asparagine glycan.

This sequence belongs to the glycosyltransferase 31 family. Interacts with B3GNT8; this interaction greatly increases B3GNT2 catalytic activity, independently of B3GNT8 enzymatic activity. Requires Mn(2+) as cofactor. In terms of tissue distribution, ubiquitous.

It localises to the golgi apparatus membrane. It carries out the reaction a beta-D-galactosyl-(1-&gt;4)-N-acetyl-beta-D-glucosaminyl derivative + UDP-N-acetyl-alpha-D-glucosamine = an N-acetyl-beta-D-glucosaminyl-(1-&gt;3)-beta-D-galactosyl-(1-&gt;4)-N-acetyl-beta-D-glucosaminyl derivative + UDP + H(+). It functions in the pathway protein modification; protein glycosylation. Functionally, beta-1,3-N-acetylglucosaminyltransferase involved in the synthesis of poly-N-acetyllactosamine. Catalyzes the initiation and elongation of poly-N-acetyllactosamine chains. Shows a marked preference for Gal(beta1-4)Glc(NAc)-based acceptors. Probably constitutes the main polylactosamine synthase. The polypeptide is N-acetyllactosaminide beta-1,3-N-acetylglucosaminyltransferase 2 (B3GNT2) (Homo sapiens (Human)).